The sequence spans 409 residues: Autophagy-related protein 37 (409 aa).

At 1–313 (MSESIDRVFV…LKLIKTVIKH (313 aa)) the chain is on the cytoplasmic side. The region spanning 5–103 (IDRVFVKAIG…LIDTMKQFAS (99 aa)) is the ACB domain. The chain crosses the membrane as a helical span at residues 314-334 (VAIDAVIIAVLVAVIKRSIII). The Peroxisomal segment spans residues 335-409 (PNLISNEISL…VSRIRLIKRN (75 aa)).

Belongs to the ATG37 family. Interacts with ATG30 and PEX3. Post-translationally, phosphorylated.

It localises to the peroxisome membrane. Its function is as follows. Acyl-CoA binding protein which acts as the peroxisome receptor for pexophagy. Required for both micropexophagy and macropexophagy, but not for the cytoplasm to vacuole transport (Cvt) or autophagy pathways. Required for functional micropexophagic apparatus (MIPA) and relocation of ATG11 to the peroxisome-sequestering arms of the vacuole. Binds palmitoyl-CoA but not oleyl-CoA. This is Autophagy-related protein 37 from Komagataella phaffii (strain GS115 / ATCC 20864) (Yeast).